The primary structure comprises 190 residues: Translation initiation factor IF-3 (190 aa).

Residues 159–190 are disordered; sequence QSEVQQKPKREGRNMIMFLSPRKSPLIKKDNE.

It belongs to the IF-3 family. As to quaternary structure, monomer.

It localises to the cytoplasm. In terms of biological role, IF-3 binds to the 30S ribosomal subunit and shifts the equilibrium between 70S ribosomes and their 50S and 30S subunits in favor of the free subunits, thus enhancing the availability of 30S subunits on which protein synthesis initiation begins. In Prochlorococcus marinus (strain MIT 9215), this protein is Translation initiation factor IF-3.